Reading from the N-terminus, the 31-residue chain is Delta-actitoxin-Dar1b (31 aa).

It belongs to the sea anemone short toxin (type III) family. Post-translationally, contains 4 disulfide bonds.

The protein localises to the secreted. Its subcellular location is the nematocyst. Its function is as follows. Binds specifically to voltage-gated sodium channels (Nav), thereby delaying their inactivation during signal transduction. In Dofleinia armata (Armed anemone), this protein is Delta-actitoxin-Dar1b.